The sequence spans 263 residues: Hydroxyacylglutathione hydrolase (263 aa).

Zn(2+) contacts are provided by histidine 55, histidine 57, aspartate 59, histidine 60, histidine 117, aspartate 134, and histidine 172.

It belongs to the metallo-beta-lactamase superfamily. Glyoxalase II family. In terms of assembly, monomer. Zn(2+) is required as a cofactor.

The catalysed reaction is an S-(2-hydroxyacyl)glutathione + H2O = a 2-hydroxy carboxylate + glutathione + H(+). It participates in secondary metabolite metabolism; methylglyoxal degradation; (R)-lactate from methylglyoxal: step 2/2. Thiolesterase that catalyzes the hydrolysis of S-D-lactoyl-glutathione to form glutathione and D-lactic acid. The polypeptide is Hydroxyacylglutathione hydrolase (Shewanella baltica (strain OS195)).